The chain runs to 524 residues: Solute carrier family 35 member F5 (524 aa).

Helical transmembrane passes span 69-89 (MALGIVILLLVDVIWVASSEL) and 101-121 (FFSTFAKTSMFVLYLLGFIIW). At Ser207 the chain carries Phosphoserine. 8 consecutive transmembrane segments (helical) span residues 244 to 264 (ISFFFCFVWFLANLSYQEALS), 269 to 289 (AIVNILSSTSGLFTLILAAVF), 297 to 317 (FTLSKLLAVILSIGGVVLVNL), 328 to 348 (TIGSIWSLAGAMFYAVYIVMI), 362 to 382 (MFFGFVGLFNLLLLWPGFFLL), 396 to 416 (VVLLCIIINGLIGTVLSEFLW), 421 to 441 (FLTSSLIGTLALSLTIPLSII), and 453 to 473 (WLFFAGAIPVFFSFFIVTLLC). In terms of domain architecture, EamA spans 253–317 (FLANLSYQEA…SIGGVVLVNL (65 aa)).

Belongs to the SLC35F solute transporter family.

The protein localises to the membrane. Functionally, putative solute transporter. The sequence is that of Solute carrier family 35 member F5 (Slc35f5) from Mus musculus (Mouse).